The following is a 372-amino-acid chain: Phospho-N-acetylmuramoyl-pentapeptide-transferase (372 aa).

10 consecutive transmembrane segments (helical) span residues 2 to 22 (LVWLFSWLGHYYAPFYAVSSL), 71 to 91 (TPTMGGVLILSAIGVSTLLWA), 98 to 118 (VWILLIVMIIFGAVGWADDWL), 134 to 154 (YFWLSMGALFVGISLYYIATL), 176 to 196 (MIPFSAVPFGIGFIIFTYFVI), 211 to 231 (GLAILPVVLVAAGLGAMAYVS), 251 to 271 (VIIVCGAMIGAGLGFLWFNAH), 275 to 295 (VFMGDVGALSLGAMLGTIAVM), 300 to 320 (IAFAIMGGLFVAEALSVMLQV), and 349 to 369 (QVVARFWIIAIILVILGLMTL).

This sequence belongs to the glycosyltransferase 4 family. MraY subfamily. Mg(2+) serves as cofactor.

Its subcellular location is the cell inner membrane. The catalysed reaction is UDP-N-acetyl-alpha-D-muramoyl-L-alanyl-gamma-D-glutamyl-meso-2,6-diaminopimeloyl-D-alanyl-D-alanine + di-trans,octa-cis-undecaprenyl phosphate = di-trans,octa-cis-undecaprenyl diphospho-N-acetyl-alpha-D-muramoyl-L-alanyl-D-glutamyl-meso-2,6-diaminopimeloyl-D-alanyl-D-alanine + UMP. The protein operates within cell wall biogenesis; peptidoglycan biosynthesis. Catalyzes the initial step of the lipid cycle reactions in the biosynthesis of the cell wall peptidoglycan: transfers peptidoglycan precursor phospho-MurNAc-pentapeptide from UDP-MurNAc-pentapeptide onto the lipid carrier undecaprenyl phosphate, yielding undecaprenyl-pyrophosphoryl-MurNAc-pentapeptide, known as lipid I. The chain is Phospho-N-acetylmuramoyl-pentapeptide-transferase from Psychrobacter cryohalolentis (strain ATCC BAA-1226 / DSM 17306 / VKM B-2378 / K5).